The chain runs to 915 residues: Hexokinase HKDC1 (915 aa).

A mitochondrial-binding peptide (MBP) region spans residues 1–20 (MFAVHLVAFYFTKLKEDQIK). Hexokinase domains follow at residues 16–458 (EDQI…MVTA) and 464–903 (QAQR…LITA). ATP is bound by residues R30 and 84–89 (DLGGSK). The segment at 73-207 (DGSENGEFLS…DLDVDILALV (135 aa)) is hexokinase small subdomain 1. Residue 84–91 (DLGGSKFR) participates in D-glucose 6-phosphate binding. Residues S155, 172 to 173 (TK), and 208 to 209 (ND) contribute to the D-glucose site. A hexokinase large subdomain 1 region spans residues 208–447 (NDTVGTMMTC…CDVRFLLSES (240 aa)). D-glucose 6-phosphate contacts are provided by D209 and T232. Residues N235, E260, and 291 to 294 (QLFE) each bind D-glucose. 413-415 (DGT) contributes to the D-glucose 6-phosphate binding site. Position 425–426 (425–426 (KR)) interacts with ATP. D-glucose 6-phosphate contacts are provided by residues S449 and 532 to 536 (DLGGT). Positions 521–652 (DGTEKGKFLA…EFDLDIVAIV (132 aa)) are hexokinase small subdomain 2. 532-537 (DLGGTN) is a binding site for ATP. Residues 600–601 (SF), 617–618 (TK), and 653–654 (ND) each bind D-glucose. The interval 653 to 892 (NDTVGTMMTC…CDVTFMLSED (240 aa)) is hexokinase large subdomain 2. The D-glucose 6-phosphate site is built by D654 and T677. T677 is an ATP binding site. D-glucose contacts are provided by residues 679–680 (SN), E705, and E739. ATP-binding positions include 744–745 (GM), 781–785 (TKFLS), and 860–864 (TLYKL). D-glucose 6-phosphate contacts are provided by residues 858 to 860 (DGT) and S894.

The protein belongs to the hexokinase family. As to expression, widely expressed. Detected in retina, brain, cerebellum, liver, lung, kidney, spleen, pancreas and intestine.

The protein localises to the cytoplasm. The protein resides in the mitochondrion membrane. It localises to the photoreceptor inner segment. The enzyme catalyses a D-hexose + ATP = a D-hexose 6-phosphate + ADP + H(+). It carries out the reaction D-glucose + ATP = D-glucose 6-phosphate + ADP + H(+). It participates in carbohydrate metabolism; hexose metabolism. The protein operates within carbohydrate degradation; glycolysis; D-glyceraldehyde 3-phosphate and glycerone phosphate from D-glucose: step 1/4. In terms of biological role, catalyzes the phosphorylation of hexose to hexose 6-phosphate, although at very low level compared to other hexokinases. Has low glucose phosphorylating activity compared to other hexokinases. Involved in glucose homeostasis and hepatic lipid accumulation. Required to maintain whole-body glucose homeostasis during pregnancy; however additional evidences are required to confirm this role. The sequence is that of Hexokinase HKDC1 from Mus musculus (Mouse).